Consider the following 329-residue polypeptide: Putative oligopeptide transport ATP-binding protein YkfD (329 aa).

The ABC transporter domain occupies 7–252 (LEVSQLKMHF…PLHPYTKALL (246 aa)). Residue 44–51 (GESGCGKS) participates in ATP binding.

This sequence belongs to the ABC transporter superfamily.

This is Putative oligopeptide transport ATP-binding protein YkfD (ykfD) from Bacillus subtilis (strain 168).